The following is a 287-amino-acid chain: uncharacterized protein (287 aa).

Residues 43–50 (GKTGAGKS), 90–93 (DLPG), and 156–159 (DKAE) each bind GTP. Positions 48 to 140 (GKSSLCNALF…TDEHFYRQVI (93 aa)) constitute a G domain.

This sequence to E.coli YkfA and YeeP.

This is an uncharacterized protein from Escherichia coli (strain K12).